Here is a 622-residue protein sequence, read N- to C-terminus: MDVNRKRMVRMASAQRSEMLVRLSGKAKRWTVGGGGEVETHTFHTFCAGQKSYKSVVRRQRPRIARRDSRPSHPIANRGMNMLVHDLGFSHRACDRCHGQKLRCRRENNSDTCVRCARAGVRCTPRPMRLRSRAQSTKNTQQQQSQSPANGGSTQQLHVNQEQGPNDTNDEHSDHFEYLPTSLLDMPTDLNMGMDPSSLQVDIHPALTAPYGPEGSVHTSQPSGPQAPSHLRTAEQAGQTRWSDAPNLDTSDELYDFSLPATMRSSFPATYHRHRASLARNMSPQPAHQQGRDDMMVDFDQAEGNPRGSDGKDSRADSGYGNELSPSDLLRSPYGDAPDSDSELQPRGNSQDQGEQSNSILDTRHQNMTSWIRRLSDTNVQLHQHMQSIPLVGTGKKTRGSGAGTSLSPMELPVDSTFKLSSQYTGLLTSICARLQACRSCNDSQALAQLALDQPSQLLVLSSYMCLLASYDRILQHIEAWLKVRLKMGVRGSAMTLDDDESSSCFPTQLPSLAVGSFEVPKTSSIQSLVLTCIMETNVMHMHSLISEIMRPVSHPATGSASKTAASGPPAAEKRPGNGAADAGDGLSTVAKVTLQAIEANEDSTLRLVHTVSRLALQRVML.

A DNA-binding region (zn(2)-C6 fungal-type) is located at residues 94-123 (CDRCHGQKLRCRRENNSDTCVRCARAGVRC). 4 disordered regions span residues 127 to 175 (PMRL…HSDH), 206 to 248 (ALTA…APNL), 299 to 360 (FDQA…SNSI), and 556 to 585 (PATG…DAGD). Composition is skewed to polar residues over residues 148–167 (PANG…GPND), 217–226 (VHTSQPSGPQ), and 347–360 (RGNS…SNSI). A compositionally biased stretch (low complexity) spans 556-571 (PATGSASKTAASGPPA).

It localises to the nucleus. Functionally, transcription factor that regulates the expression of the gene clusters that mediate the biosynthesis of pseurotin and fumagillin. The chain is C6 finger transcription factor fumR from Aspergillus fumigatus (strain ATCC MYA-4609 / CBS 101355 / FGSC A1100 / Af293) (Neosartorya fumigata).